A 21-amino-acid polypeptide reads, in one-letter code: Fibrinogen beta chain (21 aa).

Residues 1–11 show a composition bias toward acidic residues; that stretch reads EFPTDYDEGED. Residues 1-21 are disordered; sequence EFPTDYDEGEDDRPKVGLGAR. Sulfotyrosine is present on Y6.

As to quaternary structure, heterohexamer; disulfide linked. Contains 2 sets of 3 non-identical chains (alpha, beta and gamma). The 2 heterotrimers are in head to head conformation with the N-termini in a small central domain. Conversion of fibrinogen to fibrin is triggered by thrombin, which cleaves fibrinopeptides A and B from alpha and beta chains, and thus exposes the N-terminal polymerization sites responsible for the formation of the soft clot.

It localises to the secreted. Cleaved by the protease thrombin to yield monomers which, together with fibrinogen alpha (FGA) and fibrinogen gamma (FGG), polymerize to form an insoluble fibrin matrix. Fibrin has a major function in hemostasis as one of the primary components of blood clots. In addition, functions during the early stages of wound repair to stabilize the lesion and guide cell migration during re-epithelialization. Was originally thought to be essential for platelet aggregation, based on in vitro studies using anticoagulated blood. However subsequent studies have shown that it is not absolutely required for thrombus formation in vivo. Enhances expression of SELP in activated platelets. Maternal fibrinogen is essential for successful pregnancy. Fibrin deposition is also associated with infection, where it protects against IFNG-mediated hemorrhage. May also facilitate the antibacterial immune response via both innate and T-cell mediated pathways. This Bison bonasus (European bison) protein is Fibrinogen beta chain (FGB).